Consider the following 62-residue polypeptide: Small ribosomal subunit protein eS27 (62 aa).

Zn(2+)-binding residues include Cys-17, Cys-20, Cys-36, and Cys-39. The segment at 17 to 39 (CPDCENEQTIFDRACTPVDCIVC) adopts a C4-type zinc-finger fold.

The protein belongs to the eukaryotic ribosomal protein eS27 family. As to quaternary structure, part of the 30S ribosomal subunit. Requires Zn(2+) as cofactor.

The polypeptide is Small ribosomal subunit protein eS27 (Methanospirillum hungatei JF-1 (strain ATCC 27890 / DSM 864 / NBRC 100397 / JF-1)).